We begin with the raw amino-acid sequence, 264 residues long: MTVINGIILSTRQYKDNDLLVRILTETGGLRTFLARGAKKPKSALGSALQPHAVLSFEGAFPKNNQGLGYINDIQTIKIYQRLIDDIEVNAYAALIASLIDQTFEEGEQLTRWYNQFVLGLQKLDEGLDPQIIANIFEIQLLVPLGVAPNWRQDPISGQSVGQFDYSEKYNGIISDKHYDLDDHRLMLDQKTVFYLRQFSIIDLRQINQINISETTKRGLQRVIDHIYDNQIGLKPKAKTFIEQMHAWQNTLINFRQNGEGKSE.

It belongs to the RecO family.

In terms of biological role, involved in DNA repair and RecF pathway recombination. This chain is DNA repair protein RecO, found in Leuconostoc citreum (strain KM20).